Reading from the N-terminus, the 436-residue chain is Glutamyl-tRNA reductase (436 aa).

Substrate is bound by residues 49 to 52, S109, 114 to 116, and Q120; these read TCNR and EGQ. Catalysis depends on C50, which acts as the Nucleophile. Residue 198–203 coordinates NADP(+); that stretch reads GAGRMS.

It belongs to the glutamyl-tRNA reductase family. In terms of assembly, homodimer.

It carries out the reaction (S)-4-amino-5-oxopentanoate + tRNA(Glu) + NADP(+) = L-glutamyl-tRNA(Glu) + NADPH + H(+). The protein operates within porphyrin-containing compound metabolism; protoporphyrin-IX biosynthesis; 5-aminolevulinate from L-glutamyl-tRNA(Glu): step 1/2. Its pathway is porphyrin-containing compound metabolism; chlorophyll biosynthesis. Functionally, catalyzes the NADPH-dependent reduction of glutamyl-tRNA(Glu) to glutamate 1-semialdehyde (GSA). The protein is Glutamyl-tRNA reductase of Prochlorococcus marinus (strain MIT 9303).